The sequence spans 155 residues: Aspartate 1-decarboxylase (155 aa).

Residue Ser24 is the Schiff-base intermediate with substrate; via pyruvic acid of the active site. Ser24 carries the post-translational modification Pyruvic acid (Ser). Residue Thr56 coordinates substrate. The active-site Proton donor is the Tyr57. Position 72–74 (72–74 (GAA)) interacts with substrate.

It belongs to the PanD family. As to quaternary structure, heterooctamer of four alpha and four beta subunits. It depends on pyruvate as a cofactor. Post-translationally, is synthesized initially as an inactive proenzyme, which is activated by self-cleavage at a specific serine bond to produce a beta-subunit with a hydroxyl group at its C-terminus and an alpha-subunit with a pyruvoyl group at its N-terminus.

It localises to the cytoplasm. The catalysed reaction is L-aspartate + H(+) = beta-alanine + CO2. Its pathway is cofactor biosynthesis; (R)-pantothenate biosynthesis; beta-alanine from L-aspartate: step 1/1. Catalyzes the pyruvoyl-dependent decarboxylation of aspartate to produce beta-alanine. The sequence is that of Aspartate 1-decarboxylase from Agrobacterium fabrum (strain C58 / ATCC 33970) (Agrobacterium tumefaciens (strain C58)).